A 351-amino-acid chain; its full sequence is Glycerol-1-phosphate dehydrogenase [NAD(P)+] (351 aa).

NAD(+) contacts are provided by residues 97–101 and 119–122; these read GKTID and TAPS. Aspartate 124 contacts substrate. Residue serine 128 participates in NAD(+) binding. Aspartate 171 contributes to the substrate binding site. Residues aspartate 171 and histidine 251 each contribute to the Zn(2+) site. Histidine 255 provides a ligand contact to substrate. Residue histidine 267 participates in Zn(2+) binding.

It belongs to the glycerol-1-phosphate dehydrogenase family. In terms of assembly, homodimer. Requires Zn(2+) as cofactor.

It is found in the cytoplasm. The enzyme catalyses sn-glycerol 1-phosphate + NAD(+) = dihydroxyacetone phosphate + NADH + H(+). The catalysed reaction is sn-glycerol 1-phosphate + NADP(+) = dihydroxyacetone phosphate + NADPH + H(+). Its pathway is membrane lipid metabolism; glycerophospholipid metabolism. In terms of biological role, catalyzes the NAD(P)H-dependent reduction of dihydroxyacetonephosphate (DHAP or glycerone phosphate) to glycerol 1-phosphate (G1P). The G1P thus generated is used as the glycerophosphate backbone of phospholipids in the cellular membranes of Archaea. In Metallosphaera sedula (strain ATCC 51363 / DSM 5348 / JCM 9185 / NBRC 15509 / TH2), this protein is Glycerol-1-phosphate dehydrogenase [NAD(P)+].